An 87-amino-acid chain; its full sequence is Small ribosomal subunit protein bS20 (87 aa).

Residues 1–11 (MANHKSALKRI) show a composition bias toward basic residues. Residues 1-23 (MANHKSALKRIKQTEKRTERNRH) are disordered.

Belongs to the bacterial ribosomal protein bS20 family.

Functionally, binds directly to 16S ribosomal RNA. The protein is Small ribosomal subunit protein bS20 of Geotalea daltonii (strain DSM 22248 / JCM 15807 / FRC-32) (Geobacter daltonii).